Reading from the N-terminus, the 345-residue chain is Probable RuBisCO transcriptional regulator (345 aa).

One can recognise an HTH lysR-type domain in the interval 6 to 63 (FTLDQLRILKAIASEGSFKRAADTLYVSQPAVSLQVQNLEKQLSVPLFDRGGRKAQLT). The segment at residues 23-42 (FKRAADTLYVSQPAVSLQVQ) is a DNA-binding region (H-T-H motif). Residues 311–345 (LDPERLFANPYSSNNGDRQGDGKDGKGSIEIDSVT) are disordered. The segment covering 328-339 (RQGDGKDGKGSI) has biased composition (basic and acidic residues).

This sequence belongs to the LysR transcriptional regulatory family.

In terms of biological role, trans-acting transcriptional regulator of RuBisCO genes (rbcL and rbcS) expression. In Synechocystis sp. (strain ATCC 27184 / PCC 6803 / Kazusa), this protein is Probable RuBisCO transcriptional regulator (rbcR).